The primary structure comprises 87 residues: Retinal rod rhodopsin-sensitive cGMP 3',5'-cyclic phosphodiesterase subunit gamma (87 aa).

Met-1 is modified (N-acetylmethionine). Residues 1–12 (MNLEPPKAEIRS) show a composition bias toward basic and acidic residues. Residues 1 to 55 (MNLEPPKAEIRSATRVMGGPVTPRKGPPKFKQRQTRQFKSKPPKKGVQGFGDDIP) form a disordered region. A compositionally biased stretch (basic residues) spans 26–44 (GPPKFKQRQTRQFKSKPPK).

It belongs to the rod/cone cGMP-PDE gamma subunit family. In terms of assembly, oligomer composed of two catalytic chains (alpha and beta), an inhibitory chain (gamma) and the delta chain.

The catalysed reaction is 3',5'-cyclic GMP + H2O = GMP + H(+). In terms of biological role, participates in processes of transmission and amplification of the visual signal. cGMP-PDEs are the effector molecules in G-protein-mediated phototransduction in vertebrate rods and cones. The chain is Retinal rod rhodopsin-sensitive cGMP 3',5'-cyclic phosphodiesterase subunit gamma (PDE6G) from Bos taurus (Bovine).